A 209-amino-acid chain; its full sequence is Thymidine kinase (209 aa).

Residues 9–16 and 88–91 contribute to the ATP site; these read SAMNAGKT and DEAQ. Glutamate 89 functions as the Proton acceptor in the catalytic mechanism.

Belongs to the thymidine kinase family. Homotetramer.

It is found in the cytoplasm. It carries out the reaction thymidine + ATP = dTMP + ADP + H(+). The polypeptide is Thymidine kinase (Xanthomonas oryzae pv. oryzae (strain MAFF 311018)).